Reading from the N-terminus, the 155-residue chain is RNA pyrophosphohydrolase (155 aa).

The 143-residue stretch at 6–148 folds into the Nudix hydrolase domain; it reads GYRANVAIVL…KQEVYRKALT (143 aa). The short motif at 38 to 59 is the Nudix box element; the sequence is GGVDTGETPLQAMYRELHEEIG.

The protein belongs to the Nudix hydrolase family. RppH subfamily. A divalent metal cation is required as a cofactor.

Functionally, accelerates the degradation of transcripts by removing pyrophosphate from the 5'-end of triphosphorylated RNA, leading to a more labile monophosphorylated state that can stimulate subsequent ribonuclease cleavage. The chain is RNA pyrophosphohydrolase from Francisella tularensis subsp. mediasiatica (strain FSC147).